The chain runs to 480 residues: Aspartyl/glutamyl-tRNA(Asn/Gln) amidotransferase subunit B (480 aa).

Belongs to the GatB/GatE family. GatB subfamily. As to quaternary structure, heterotrimer of A, B and C subunits.

The enzyme catalyses L-glutamyl-tRNA(Gln) + L-glutamine + ATP + H2O = L-glutaminyl-tRNA(Gln) + L-glutamate + ADP + phosphate + H(+). It carries out the reaction L-aspartyl-tRNA(Asn) + L-glutamine + ATP + H2O = L-asparaginyl-tRNA(Asn) + L-glutamate + ADP + phosphate + 2 H(+). Allows the formation of correctly charged Asn-tRNA(Asn) or Gln-tRNA(Gln) through the transamidation of misacylated Asp-tRNA(Asn) or Glu-tRNA(Gln) in organisms which lack either or both of asparaginyl-tRNA or glutaminyl-tRNA synthetases. The reaction takes place in the presence of glutamine and ATP through an activated phospho-Asp-tRNA(Asn) or phospho-Glu-tRNA(Gln). This is Aspartyl/glutamyl-tRNA(Asn/Gln) amidotransferase subunit B from Hahella chejuensis (strain KCTC 2396).